A 263-amino-acid chain; its full sequence is Neurogenin-2 (263 aa).

Positions 20–76 are disordered; it reads LGSASPASATLTPMSSSADEEEDEELRRPGSARGQRGAEAEQGVQGSPASGAGGCRP. Polar residues predominate over residues 24-36; sequence SPASATLTPMSSS. Residues 112-164 form the bHLH domain; the sequence is TRRLKANNRERNRMHNLNAALDALREVLPTFPEDAKLTKIETLRFAHNYIWAL. Low complexity predominate over residues 197-231; the sequence is LGASGDSPSPPSSWSCTNSPASSSNSTSPYSCTLS. The disordered stretch occupies residues 197 to 253; sequence LGASGDSPSPPSSWSCTNSPASSSNSTSPYSCTLSPASPGSDVDYWQPPPPEKHRYA.

In terms of assembly, efficient DNA binding requires dimerization with another bHLH protein.

It localises to the nucleus. Functionally, transcriptional regulator. Involved in neuronal differentiation. Activates transcription by binding to the E box (5'-CANNTG-3'). The chain is Neurogenin-2 (Neurog2) from Mus musculus (Mouse).